Consider the following 90-residue polypeptide: UPF0213 protein lin0209 (90 aa).

The 76-residue stretch at 5–80 folds into the GIY-YIG domain; the sequence is NEHFFYVLKC…KKLSRKNKDS (76 aa).

It belongs to the UPF0213 family.

This is UPF0213 protein lin0209 from Listeria innocua serovar 6a (strain ATCC BAA-680 / CLIP 11262).